A 362-amino-acid chain; its full sequence is 3-isopropylmalate dehydrogenase (362 aa).

76–87 (GPKWGTGSVRPE) is an NAD(+) binding site. The substrate site is built by Arg-94, Arg-104, Arg-133, and Asp-222. The Mg(2+) site is built by Asp-222, Asp-247, and Asp-251. NAD(+) is bound at residue 286 to 297 (GSAPDLGPGKVN).

The protein belongs to the isocitrate and isopropylmalate dehydrogenases family. In terms of assembly, homodimer. Mg(2+) is required as a cofactor. The cofactor is Mn(2+).

The protein localises to the cytoplasm. It catalyses the reaction (2R,3S)-3-isopropylmalate + NAD(+) = 4-methyl-2-oxopentanoate + CO2 + NADH. The protein operates within amino-acid biosynthesis; L-leucine biosynthesis; L-leucine from 3-methyl-2-oxobutanoate: step 3/4. Its function is as follows. Catalyzes the oxidation of 3-carboxy-2-hydroxy-4-methylpentanoate (3-isopropylmalate) to 3-carboxy-4-methyl-2-oxopentanoate. The product decarboxylates to 4-methyl-2 oxopentanoate. The sequence is that of 3-isopropylmalate dehydrogenase (LEU2) from Pichia angusta (Yeast).